Here is a 193-residue protein sequence, read N- to C-terminus: Imidazoleglycerol-phosphate dehydratase (193 aa).

The protein belongs to the imidazoleglycerol-phosphate dehydratase family.

It is found in the cytoplasm. The catalysed reaction is D-erythro-1-(imidazol-4-yl)glycerol 3-phosphate = 3-(imidazol-4-yl)-2-oxopropyl phosphate + H2O. The protein operates within amino-acid biosynthesis; L-histidine biosynthesis; L-histidine from 5-phospho-alpha-D-ribose 1-diphosphate: step 6/9. The polypeptide is Imidazoleglycerol-phosphate dehydratase (Saccharolobus islandicus (strain M.16.27) (Sulfolobus islandicus)).